We begin with the raw amino-acid sequence, 148 residues long: Deoxyuridine 5'-triphosphate nucleotidohydrolase (148 aa).

Substrate-binding positions include 68–70, asparagine 81, 85–87, and lysine 95; these read RSG and TID.

This sequence belongs to the dUTPase family. Mg(2+) serves as cofactor.

The enzyme catalyses dUTP + H2O = dUMP + diphosphate + H(+). The protein operates within pyrimidine metabolism; dUMP biosynthesis; dUMP from dCTP (dUTP route): step 2/2. Functionally, this enzyme is involved in nucleotide metabolism: it produces dUMP, the immediate precursor of thymidine nucleotides and it decreases the intracellular concentration of dUTP so that uracil cannot be incorporated into DNA. This Rickettsia peacockii (strain Rustic) protein is Deoxyuridine 5'-triphosphate nucleotidohydrolase.